A 91-amino-acid polypeptide reads, in one-letter code: Probable Fe(2+)-trafficking protein (91 aa).

This sequence belongs to the Fe(2+)-trafficking protein family.

Could be a mediator in iron transactions between iron acquisition and iron-requiring processes, such as synthesis and/or repair of Fe-S clusters in biosynthetic enzymes. This is Probable Fe(2+)-trafficking protein from Actinobacillus pleuropneumoniae serotype 5b (strain L20).